The chain runs to 242 residues: MSKQPENSFSSDKFFPIKQKLALEAVALVEPGMCVGLGSGSTAREFILALGDRVRTERLVITAVASSRISQLLAEAVGIPLLDHSLLQDVDLVVDGADEVDPCLRMIKGGGGALFREKILLQSGKRNVILVDERKLVPTLGKFSLPIEIAPFGCSSVQRILNKQGYFGEWRETSAGERFITDNGNYIYDVRTPDSYANPEEDMIRLLQIRGIIDVGFVIAKAEVWVGYADGSIVRKKEHNEY.

Substrate is bound by residues 39 to 42 (SGST), 95 to 98 (DGAD), and 108 to 111 (KGGG). Residue glutamate 117 is the Proton acceptor of the active site. Lysine 135 lines the substrate pocket.

The protein belongs to the ribose 5-phosphate isomerase family. As to quaternary structure, homodimer.

It catalyses the reaction aldehydo-D-ribose 5-phosphate = D-ribulose 5-phosphate. It functions in the pathway carbohydrate degradation; pentose phosphate pathway; D-ribose 5-phosphate from D-ribulose 5-phosphate (non-oxidative stage): step 1/1. Its function is as follows. Catalyzes the reversible conversion of ribose-5-phosphate to ribulose 5-phosphate. The chain is Ribose-5-phosphate isomerase A from Chlamydia trachomatis serovar L2 (strain ATCC VR-902B / DSM 19102 / 434/Bu).